Consider the following 777-residue polypeptide: Kelch domain-containing protein 7A (777 aa).

The helical transmembrane segment at 21-38 (VVLSAAALLLVTVAYRLY) threads the bilayer. Positions 43-207 (APAQRWGGNG…GLGQLEPPHC (165 aa)) are disordered. Serine 86 carries the phosphoserine modification. Residues 113 to 127 (TDRKPQRKGSGEERG) show a composition bias toward basic and acidic residues. Asparagine 257 carries an N-linked (GlcNAc...) asparagine glycan. A disordered region spans residues 313–359 (LTEVPSPRPPPGSLGTGAASGGQAGDTKGAAERAASPQTGPWPSTRG). Gly residues predominate over residues 326–336 (LGTGAASGGQA). Kelch repeat units lie at residues 328–374 (TGAA…ENPE), 492–538 (QYLV…ICSL), 541–589 (YLFV…ALDG), 590–632 (HLYA…ATVR), and 635–677 (EIFV…AVNG). Serine 365 carries the phosphoserine modification.

It is found in the membrane. This chain is Kelch domain-containing protein 7A (KLHDC7A), found in Homo sapiens (Human).